Consider the following 330-residue polypeptide: 5'-AMP-activated protein kinase subunit gamma-1 (330 aa).

A compositionally biased stretch (polar residues) spans 1-13; the sequence is METVTSSDSSSAV. Residues 1-26 form a disordered region; that stretch reads METVTSSDSSSAVENEHPQDTPESNN. CBS domains follow at residues 43 to 103, 125 to 187, and 198 to 260; these read PTSS…KSAL, SFKP…PKPE, and IGTY…NLDV. ADP contacts are provided by residues Arg70, 85-90, Val130, 151-152, and Lys170; these read MLTITD and HR. AMP is bound by residues Arg70, 85 to 90, Val130, His151, 151 to 152, Lys170, Thr200, Ala205, 226 to 227, and 242 to 245; these read MLTITD, HR, SA, and SKFD. ATP-binding positions include Arg70, 85–90, Val130, 151–152, Arg152, and Lys170; these read MLTITD and HR. An AMPK pseudosubstrate motif is present at residues 138-159; that stretch reads LFDAVSSLIRNKIHRLPVIDPE. Residue 242 to 245 coordinates ADP; the sequence is SKFD. 242-245 contributes to the ATP binding site; that stretch reads SKFD. Residue Ser261 is modified to Phosphoserine; by ULK1. Thr263 carries the post-translational modification Phosphothreonine; by ULK1. Arg269 is an ADP binding site. Arg269 is a binding site for AMP. Arg269 serves as a coordination point for ATP. Ser270 carries the post-translational modification Phosphoserine; by ULK1. In terms of domain architecture, CBS 4 spans 272 to 329; the sequence is YFEGVLKCYLHETLETIINRLVEAEVHRLVVVDENDVVKGIVSLSDILQALVLTGGEK. Residues Leu277 and 298 to 299 each bind ADP; that span reads HR. Residues Leu277, His298, 298-299, and 314-317 contribute to the AMP site; these read HR and SLSD. ATP contacts are provided by residues Leu277 and 298 to 299; that span reads HR.

This sequence belongs to the 5'-AMP-activated protein kinase gamma subunit family. As to quaternary structure, AMPK is a heterotrimer of an alpha catalytic subunit (PRKAA1 or PRKAA2), a beta (PRKAB1 or PRKAB2) and a gamma non-catalytic subunits (PRKAG1, PRKAG2 or PRKAG3). Interacts with FNIP1 and FNIP2. Post-translationally, phosphorylated by ULK1 and ULK2; leading to negatively regulate AMPK activity and suggesting the existence of a regulatory feedback loop between ULK1, ULK2 and AMPK. Glycosylated; O-GlcNAcylated by OGT, promoting the AMP-activated protein kinase (AMPK) activity.

In terms of biological role, AMP/ATP-binding subunit of AMP-activated protein kinase (AMPK), an energy sensor protein kinase that plays a key role in regulating cellular energy metabolism. In response to reduction of intracellular ATP levels, AMPK activates energy-producing pathways and inhibits energy-consuming processes: inhibits protein, carbohydrate and lipid biosynthesis, as well as cell growth and proliferation. AMPK acts via direct phosphorylation of metabolic enzymes, and by longer-term effects via phosphorylation of transcription regulators. Also acts as a regulator of cellular polarity by remodeling the actin cytoskeleton; probably by indirectly activating myosin. Gamma non-catalytic subunit mediates binding to AMP, ADP and ATP, leading to activate or inhibit AMPK: AMP-binding results in allosteric activation of alpha catalytic subunit (PRKAA1 or PRKAA2) both by inducing phosphorylation and preventing dephosphorylation of catalytic subunits. ADP also stimulates phosphorylation, without stimulating already phosphorylated catalytic subunit. ATP promotes dephosphorylation of catalytic subunit, rendering the AMPK enzyme inactive. This chain is 5'-AMP-activated protein kinase subunit gamma-1 (PRKAG1), found in Sus scrofa (Pig).